A 716-amino-acid chain; its full sequence is Antibacterial effector protein Tle3 (716 aa).

Positions 68-87 (PTLPGGQANPGYLTPAGYSL) are disordered.

In terms of assembly, interacts in the cytoplasm with the adapter protein Tla3. Interacts in the periplasm with the immunity protein Tli3.

The protein resides in the secreted. The protein localises to the host periplasm. Neutralized by the immunity protein Tli3 in the periplasm of P.aeruginosa cells. Functionally, antibacterial effector. Is toxic once delivered in the periplasm of prey bacteria. The polypeptide is Antibacterial effector protein Tle3 (Pseudomonas aeruginosa (strain ATCC 15692 / DSM 22644 / CIP 104116 / JCM 14847 / LMG 12228 / 1C / PRS 101 / PAO1)).